We begin with the raw amino-acid sequence, 104 residues long: L-rhamnose mutarotase (104 aa).

Residue tyrosine 18 coordinates substrate. Residue histidine 22 is the Proton donor of the active site. Residues tyrosine 41 and 76–77 contribute to the substrate site; that span reads WW.

It belongs to the rhamnose mutarotase family. In terms of assembly, homodimer.

Its subcellular location is the cytoplasm. It carries out the reaction alpha-L-rhamnose = beta-L-rhamnose. Its pathway is carbohydrate metabolism; L-rhamnose metabolism. Involved in the anomeric conversion of L-rhamnose. The sequence is that of L-rhamnose mutarotase from Listeria monocytogenes serovar 1/2a (strain ATCC BAA-679 / EGD-e).